We begin with the raw amino-acid sequence, 439 residues long: Oxysterol-binding protein 6 (439 aa).

2 disordered regions span residues 1-40 (MSAK…SGAD) and 409-439 (ESST…QTTN). 2 stretches are compositionally biased toward polar residues: residues 409 to 419 (ESSTPNLSKVD) and 429 to 439 (PVDNSIPQTTN).

The protein belongs to the OSBP family.

The protein is Oxysterol-binding protein 6 (osbF) of Dictyostelium discoideum (Social amoeba).